Reading from the N-terminus, the 258-residue chain is Imidazole glycerol phosphate synthase subunit HisF (258 aa).

Catalysis depends on residues aspartate 11 and aspartate 130.

Belongs to the HisA/HisF family. As to quaternary structure, heterodimer of HisH and HisF.

It localises to the cytoplasm. It catalyses the reaction 5-[(5-phospho-1-deoxy-D-ribulos-1-ylimino)methylamino]-1-(5-phospho-beta-D-ribosyl)imidazole-4-carboxamide + L-glutamine = D-erythro-1-(imidazol-4-yl)glycerol 3-phosphate + 5-amino-1-(5-phospho-beta-D-ribosyl)imidazole-4-carboxamide + L-glutamate + H(+). It participates in amino-acid biosynthesis; L-histidine biosynthesis; L-histidine from 5-phospho-alpha-D-ribose 1-diphosphate: step 5/9. In terms of biological role, IGPS catalyzes the conversion of PRFAR and glutamine to IGP, AICAR and glutamate. The HisF subunit catalyzes the cyclization activity that produces IGP and AICAR from PRFAR using the ammonia provided by the HisH subunit. This is Imidazole glycerol phosphate synthase subunit HisF from Shigella boydii serotype 4 (strain Sb227).